The sequence spans 528 residues: GMP synthase [glutamine-hydrolyzing] (528 aa).

The 192-residue stretch at 13 to 204 (SIVILDFGSQ…VHNICRSKPD (192 aa)) folds into the Glutamine amidotransferase type-1 domain. The active-site Nucleophile is the cysteine 90. Active-site residues include histidine 178 and glutamate 180. The region spanning 205-403 (WTTNTFIDEA…LGLPEEIVNR (199 aa)) is the GMPS ATP-PPase domain. Residue 232-238 (SGGVDSS) participates in ATP binding.

In terms of assembly, homodimer.

The enzyme catalyses XMP + L-glutamine + ATP + H2O = GMP + L-glutamate + AMP + diphosphate + 2 H(+). It functions in the pathway purine metabolism; GMP biosynthesis; GMP from XMP (L-Gln route): step 1/1. In terms of biological role, catalyzes the synthesis of GMP from XMP. This Prochlorococcus marinus (strain SARG / CCMP1375 / SS120) protein is GMP synthase [glutamine-hydrolyzing].